A 1735-amino-acid polypeptide reads, in one-letter code: Inactive tyrosine-protein kinase PEAK1 (1735 aa).

Disordered regions lie at residues 26–66 (LHQL…PPVA) and 111–145 (LSQK…KISN). Polar residues-rich tracts occupy residues 111–121 (LSQKPLNNNSE) and 130–145 (DPQQ…KISN). A Phosphoserine modification is found at S282. 3 disordered regions span residues 324–410 (NSGV…SVKV), 491–514 (GRPK…LTPG), and 537–580 (SPRQ…SKTI). Over residues 325–336 (SGVSYGQGSVQS) the composition is skewed to low complexity. Polar residues predominate over residues 337–365 (TISSDCTSPGSSFTEESRSETASSLSQKV). A compositionally biased stretch (low complexity) spans 367–378 (NGGISPGNPGNS). Over residues 384–393 (TESNFESPPG) the composition is skewed to polar residues. The span at 498–509 (SSSTPNSPVTSP) shows a compositional bias: low complexity. 3 positions are modified to phosphoserine: S537, S569, and S584. Polar residues predominate over residues 566-580 (APTSPTATNISSKTI). Y632 and Y638 each carry phosphotyrosine. The residue at position 645 (S645) is a Phosphoserine. At Y662 the chain carries Phosphotyrosine. Disordered regions lie at residues 663-762 (EEIE…REKA), 800-919 (PDAD…AADA), and 1019-1097 (RNSE…SATY). Composition is skewed to polar residues over residues 704–735 (QEFN…QRPT), 745–757 (AQGS…SSNS), and 819–839 (LFTS…SPTA). Phosphoserine is present on residues S824 and S825. The segment covering 847–863 (TKPVTSPPSKLVTSAQS) has biased composition (low complexity). A compositionally biased stretch (pro residues) spans 864 to 873 (EPPPPFPPPR). Over residues 879–901 (YHASNLLQRHFTNWTKPTSPTRS) the composition is skewed to polar residues. S897 is modified (phosphoserine). Basic and acidic residues-rich tracts occupy residues 902-919 (TEAE…AADA) and 1037-1055 (ACSR…RDPR). The segment covering 1076–1086 (EREEEKDDTLD) has biased composition (acidic residues). Phosphothreonine is present on T1141. A Phosphotyrosine modification is found at Y1177. The tract at residues 1274-1300 (EVVGKLRSLHTDALKRLAVKCEDLFMA) is required for homodimerization. The region spanning 1302-1664 (QKDQLRFGVD…LLWGPREDLF (363 aa)) is the Protein kinase domain. At S1363 the chain carries Phosphoserine. Residues 1394 to 1445 (WEDPDAPEKAEDGTEDSEEEGKAETLGGNPEPCSETEPSQKENQRVTNRKQR) are disordered. A required for homodimerization region spans residues 1659 to 1732 (PREDLFQIFT…DSLSYIVKIL (74 aa)).

Belongs to the protein kinase superfamily. As to quaternary structure, homodimer. Interacts with BCAR1 and CRK. Interacts with PRAG1. Interacts (when phosphorylated at Tyr-1177) with SHC1 (via PID domain). Found in a complex with PPP1CA, PPP1CC and SHC1. Interacts (when phosphorylated at Tyr-632) with tensin TNS3 (when phosphorylated on the SH2 domain); TNS3 also interacts with integrins ITGB1, ITGB3 and ITGB5 and mediates their association with PEAK1. In terms of processing, phosphorylated on tyrosine in a CSK-dependent manner in response to adhesion to fibronectin and to EGF stimulation. Phosphorylation at Tyr-662 by a Src family kinase controls subcellular localization to focal adhesion and focal adhesion dynamics. Phosphorylation at Tyr-1177 is essential for binding to SHC1. Phosphorylation at Tyr-632 promotes interaction with tensin TNS3.

The protein localises to the cytoplasm. Its subcellular location is the cytoskeleton. It is found in the cell junction. The protein resides in the focal adhesion. Functionally, probable catalytically inactive kinase. Scaffolding protein that regulates the cytoskeleton to control cell spreading and migration by modulating focal adhesion dynamics. Acts as a scaffold for mediating EGFR signaling. This Mus musculus (Mouse) protein is Inactive tyrosine-protein kinase PEAK1 (Peak1).